The primary structure comprises 78 residues: Large ribosomal subunit protein bL28 (78 aa).

The disordered stretch occupies residues 1–20; the sequence is MSRVCQVTGKGPVTGNNISH.

Belongs to the bacterial ribosomal protein bL28 family.

The protein is Large ribosomal subunit protein bL28 of Pseudomonas putida (strain ATCC 700007 / DSM 6899 / JCM 31910 / BCRC 17059 / LMG 24140 / F1).